The chain runs to 173 residues: Enhancer of split mdelta protein (173 aa).

The bHLH domain maps to 15–72; it reads YRKVTKPLLERKRRARMNLYLDELKDLIVDTMDAQGEQVSKLEKADILELTVNYLKAQ. The Orange domain maps to 93–126; it reads FRAGYTQAAYEVSHIFSTVPGLDLKFGTHLMKQL. Residues 147-173 form a disordered region; it reads VNLADQKRSKSPREEDIHHGEEVWRPW. Over residues 151-173 the composition is skewed to basic and acidic residues; it reads DQKRSKSPREEDIHHGEEVWRPW. The WRPW motif signature appears at 170-173; that stretch reads WRPW.

In terms of assembly, transcription repression requires formation of a complex with a corepressor protein (Groucho).

The protein resides in the nucleus. In terms of biological role, transcriptional repressor of genes that require a bHLH protein for their transcription. May serve as a transcriptional regulator of the Achaete-scute complex (AS-C) genes. Contributes to the neural-epidermal lineage decision during early neurogenesis. As part of the Notch signaling pathway, required to maintain the self-renewal and identity of type II neuroblasts by regulating the expression of the transcriptional repressor erm. This chain is Enhancer of split mdelta protein, found in Drosophila melanogaster (Fruit fly).